The chain runs to 1381 residues: DNA-directed RNA polymerase subunit beta'' (1381 aa).

Residues Cys224, Cys295, Cys302, and Cys305 each contribute to the Zn(2+) site.

This sequence belongs to the RNA polymerase beta' chain family. RpoC2 subfamily. As to quaternary structure, in plastids the minimal PEP RNA polymerase catalytic core is composed of four subunits: alpha, beta, beta', and beta''. When a (nuclear-encoded) sigma factor is associated with the core the holoenzyme is formed, which can initiate transcription. It depends on Zn(2+) as a cofactor.

The protein localises to the plastid. It is found in the chloroplast. It catalyses the reaction RNA(n) + a ribonucleoside 5'-triphosphate = RNA(n+1) + diphosphate. In terms of biological role, DNA-dependent RNA polymerase catalyzes the transcription of DNA into RNA using the four ribonucleoside triphosphates as substrates. This is DNA-directed RNA polymerase subunit beta'' from Lactuca sativa (Garden lettuce).